The following is a 514-amino-acid chain: MVVEFKNEPGYDFSVQENVDMFKKALKDVEKELGQDIPLVINGEKIFKDDKIKSINPADTSQVIANASKATKQDVEDAFKAADEAYKSWKTWSANDRAELMLRVSAIIRRRKAEIAAIMVYEAGKPWDEAVGDAAEGIDFIEYYARSMMDLAQGKPVLDREGEHNKYFYKSIGTGVTIPPWNFPFAIMAGTTLAPVVAGNTVLLKPAEDTPYIAYKLMEILEEAGLPKGVVNFVPGDPKEIGDYLVDHKDTHFVTFTGSRATGTRIYERSAVVQEGQNFLKRVIAEMGGKDAIVVDENIDTDMAAEAIVTSAFGFSGQKCSACSRAIVHKDVYDEVLEKSIKLTKELTLGNTVDNTYMGPVINKKQFDKIKNYIEIGKEEGKLEQGGGTDDSKGYFVEPTIISGLKSKDRIMQEEIFGPVVGFVKVNDFDEAIEVANDTDYGLTGAVITNNREHWIKAVNEFDVGNLYLNRGCTSAVVGYHPFGGFKMSGTDAKTGSPDYLLHFLEQKVVSEMF.

Active-site residues include Glu286 and Cys320.

Belongs to the aldehyde dehydrogenase family. RocA subfamily.

The catalysed reaction is L-glutamate 5-semialdehyde + NAD(+) + H2O = L-glutamate + NADH + 2 H(+). The protein operates within amino-acid degradation; L-proline degradation into L-glutamate; L-glutamate from L-proline: step 2/2. In Staphylococcus aureus (strain MW2), this protein is 1-pyrroline-5-carboxylate dehydrogenase.